We begin with the raw amino-acid sequence, 727 residues long: Glycerol-3-phosphate dehydrogenase, mitochondrial (727 aa).

The N-terminal 42 residues, 1 to 42 (MAFQKVVKGTILMGGGALATVLGLSQFAHYRRKQVSLAYVEA), are a transit peptide targeting the mitochondrion. 71-99 (DILVIGGGATGCGCALDAVTRGLKTALVE) contacts FAD. Tyr601 is modified (phosphotyrosine). EF-hand domains follow at residues 623-658 (PDID…INVQ) and 659-694 (MDED…VHTG). The Ca(2+) site is built by Asp672, Asn674, Asn676, Gln678, and Glu683.

This sequence belongs to the FAD-dependent glycerol-3-phosphate dehydrogenase family. The cofactor is FAD.

The protein resides in the mitochondrion. The catalysed reaction is a quinone + sn-glycerol 3-phosphate = dihydroxyacetone phosphate + a quinol. The protein operates within polyol metabolism; glycerol degradation via glycerol kinase pathway; glycerone phosphate from sn-glycerol 3-phosphate (anaerobic route): step 1/1. Calcium-binding enhance the activity of the enzyme. Calcium-responsive mitochondrial glycerol-3-phosphate dehydrogenase which seems to be a key component of the pancreatic beta-cell glucose-sensing device. This Rattus norvegicus (Rat) protein is Glycerol-3-phosphate dehydrogenase, mitochondrial.